Here is a 954-residue protein sequence, read N- to C-terminus: Zinc finger protein 618 (954 aa).

Residue methionine 1 is modified to N-acetylmethionine. Positions methionine 1–glycine 19 are enriched in low complexity. The interval methionine 1–threonine 56 is disordered. Residues lysine 63 and lysine 81 each participate in a glycyl lysine isopeptide (Lys-Gly) (interchain with G-Cter in SUMO2) cross-link. 2 C2H2-type zinc fingers span residues tyrosine 147 to histidine 169 and tyrosine 188 to histidine 210. A Glycyl lysine isopeptide (Lys-Gly) (interchain with G-Cter in SUMO2) cross-link involves residue lysine 239. The segment at tyrosine 256–histidine 278 adopts a C2H2-type 3 zinc-finger fold. 2 disordered regions span residues serine 282–serine 307 and arginine 337–glutamate 390. Positions proline 340–serine 357 are enriched in polar residues. Positions phenylalanine 366–glutamate 380 are enriched in basic and acidic residues. The segment at tyrosine 392 to histidine 414 adopts a C2H2-type 4 zinc-finger fold. Residues asparagine 421–glutamate 463 form a disordered region. A Glycyl lysine isopeptide (Lys-Gly) (interchain with G-Cter in SUMO2) cross-link involves residue lysine 437. Residues alanine 442–serine 459 are compositionally biased toward polar residues.

Belongs to the krueppel C2H2-type zinc-finger protein family. As to quaternary structure, interacts with UHRF2.

It localises to the nucleus. It is found in the chromosome. In terms of biological role, regulates UHRF2 function as a specific 5-hydroxymethylcytosine (5hmC) reader by regulating its chromatin localization. The polypeptide is Zinc finger protein 618 (ZNF618) (Homo sapiens (Human)).